A 280-amino-acid polypeptide reads, in one-letter code: Cobalt import ATP-binding protein CbiO (280 aa).

Residues 2 to 236 form the ABC transporter domain; that stretch reads IEVRDLRFHY…GDWLRQQGLG (235 aa). An ATP-binding site is contributed by 36 to 43; that stretch reads GANGCGKT.

Belongs to the ABC transporter superfamily. Cobalt importer (TC 3.A.1.18.1) family. Forms an energy-coupling factor (ECF) transporter complex composed of an ATP-binding protein (A component, CbiO), a transmembrane protein (T component, CbiQ) and 2 possible substrate-capture proteins (S components, CbiM and CbiN) of unknown stoichimetry.

The protein resides in the cell inner membrane. It functions in the pathway cofactor biosynthesis; adenosylcobalamin biosynthesis. Functionally, part of the energy-coupling factor (ECF) transporter complex CbiMNOQ involved in cobalt import. Presumably responsible for energy coupling to the transport system. This is Cobalt import ATP-binding protein CbiO from Syntrophus aciditrophicus (strain SB).